A 600-amino-acid polypeptide reads, in one-letter code: MKYKDEKYEKAEKGSRILPKTVLLILLCGLSFYLGGLYCGKNIIEVSDVAKAESSSLDVDDSLQVKSVSFSECSSDYQDYTPCTDPRKWKKYGTHRLTFMERHCPPVFDRKQCLVPPPDGYKPPIRWPKSKDECWYRNVPYDWINKQKSNQNWLRKEGEKFIFPGGGTMFPHGVSAYVDLMQDLIPEMKDGTIRTAIDTGCGVASWGGDLLDRGILTVSLAPRDNHEAQVQFALERGIPAILGIISTQRLPFPSNSFDMAHCSRCLIPWTEFGGVYLLEVHRILRPGGFWVLSGPPVNYENRWKGWDTTIEEQRSNYEKLQELLSSMCFKMYAKKDDIAVWQKSPDNLCYNKLSNDPDAYPPKCDDSLEPDSAWYTPLRPCVVVPSPKLKKTDLESTPKWPERLHTTPERISDVPGGNGNVFKHDDSKWKTRAKHYKKLLPAIGSDKIRNVMDMNTAYGGLAAALVNDPLWVMNVVSSYAANTLPVVFDRGLIGTYHDWCEAFSTYPRTYDLLHVDGLFTSESQRCDMKYVMLEMDRILRPSGYAIIRESSYFADSIASVAKELRWSCRKEQTESASANEKLLICQKKLWYSSNASSETN.

The Cytoplasmic segment spans residues 1–16; that stretch reads MKYKDEKYEKAEKGSR. Residues 17 to 37 traverse the membrane as a helical; Signal-anchor for type II membrane protein segment; that stretch reads ILPKTVLLILLCGLSFYLGGL. Residues 38–600 are Lumenal-facing; that stretch reads YCGKNIIEVS…YSSNASSETN (563 aa). N-linked (GlcNAc...) asparagine glycosylation is present at asparagine 594.

It belongs to the methyltransferase superfamily.

Its subcellular location is the endoplasmic reticulum membrane. The chain is Probable methyltransferase PMT21 (ERD3) from Arabidopsis thaliana (Mouse-ear cress).